Consider the following 256-residue polypeptide: Ribosomal RNA small subunit methyltransferase J (256 aa).

S-adenosyl-L-methionine-binding positions include 101–102 (RD), 117–118 (ER), and D174.

It belongs to the methyltransferase superfamily. RsmJ family.

Its subcellular location is the cytoplasm. The catalysed reaction is guanosine(1516) in 16S rRNA + S-adenosyl-L-methionine = N(2)-methylguanosine(1516) in 16S rRNA + S-adenosyl-L-homocysteine + H(+). Specifically methylates the guanosine in position 1516 of 16S rRNA. This chain is Ribosomal RNA small subunit methyltransferase J, found in Chromohalobacter salexigens (strain ATCC BAA-138 / DSM 3043 / CIP 106854 / NCIMB 13768 / 1H11).